The primary structure comprises 319 residues: Capsid protein (319 aa).

The protein resides in the virion. Functionally, the capsid protein self-assembles to form an icosahedral capsid with a T=2 symmetry made of 120 subunits. The sequence is that of Capsid protein from Cryptosporidium parvum virus 1 (strain KSU-1).